The chain runs to 158 residues: Ribosome maturation factor RimP (158 aa).

This sequence belongs to the RimP family.

It localises to the cytoplasm. Required for maturation of 30S ribosomal subunits. In Lactiplantibacillus plantarum (strain ATCC BAA-793 / NCIMB 8826 / WCFS1) (Lactobacillus plantarum), this protein is Ribosome maturation factor RimP.